Reading from the N-terminus, the 358-residue chain is Probable tartrate dehydrogenase/decarboxylase TtuC' (358 aa).

Residues D222, D246, and D250 each coordinate Mn(2+).

It belongs to the isocitrate and isopropylmalate dehydrogenases family. Mg(2+) serves as cofactor. The cofactor is Mn(2+). Requires K(+) as cofactor.

The protein localises to the cytoplasm. It carries out the reaction tartrate + NAD(+) = 2-hydroxy-3-oxosuccinate + NADH + H(+). The catalysed reaction is (2R,3S)-tartrate + NAD(+) = 2-hydroxy-3-oxosuccinate + NADH + H(+). It catalyses the reaction (2R,3R)-tartrate + NAD(+) = 2-hydroxy-3-oxosuccinate + NADH + H(+). The enzyme catalyses (2R,3R)-tartrate + H(+) = (R)-glycerate + CO2. It carries out the reaction (R)-malate + NAD(+) = pyruvate + CO2 + NADH. Its pathway is carbohydrate acid metabolism; tartrate degradation; 2-hydroxy-3-oxosuccinate from L-tartrate: step 1/1. It functions in the pathway carbohydrate acid metabolism; tartrate degradation; 2-hydroxy-3-oxosuccinate from meso-tartrate: step 1/1. The protein operates within carbohydrate acid metabolism; tartrate degradation; D-glycerate from L-tartrate: step 1/1. Its function is as follows. Has multiple catalytic activities. Apart from catalyzing the oxidation of (+)-tartrate to oxaloglycolate, also converts meso-tartrate to D-glycerate and catalyzes the oxidative decarboxylation of D-malate to pyruvate. This Agrobacterium vitis (Rhizobium vitis) protein is Probable tartrate dehydrogenase/decarboxylase TtuC' (ttuC').